Reading from the N-terminus, the 409-residue chain is Astacin-like metalloendopeptidase (409 aa).

Residues 1 to 19 form the signal peptide; it reads MDLKMLLIFTAFLLPAVLG. Positions 20-86 are excised as a propeptide; that stretch reads FPIQDNYENS…EGDIVPRRSR (67 aa). Residues 30–42 are compositionally biased toward low complexity; it reads TATSESTQVTTEE. Positions 30-55 are disordered; the sequence is TATSESTQVTTEESIYDSPSPTETDS. Residues 87 to 285 form the Peptidase M12A domain; that stretch reads SAFNCRNCYW…AKINKLYNCS (199 aa). Intrachain disulfides connect Cys-91-Cys-94, Cys-134-Cys-284, Cys-155-Cys-175, Cys-287-Cys-313, and Cys-339-Cys-362. His-183 contacts Zn(2+). Glu-184 is an active-site residue. The Zn(2+) site is built by His-187 and His-193. A CUB domain is found at 287–399; that stretch reads CSTIIDAAFG…SGFQATFTSA (113 aa).

Requires Zn(2+) as cofactor.

The protein localises to the cytoplasm. It is found in the cell membrane. Its subcellular location is the cytoplasmic vesicle. It localises to the secretory vesicle. The protein resides in the cortical granule. Functionally, probable oocyte-specific oolemmal receptor involved in sperm and egg adhesion and fertilization. Protease which may play a role in the breaking down of the vitelline membrane (days 0-5) and possibly, in the digestion of the egg white (days 9-12). The sequence is that of Astacin-like metalloendopeptidase from Coturnix japonica (Japanese quail).